Here is a 478-residue protein sequence, read N- to C-terminus: Alpha,alpha-trehalose-phosphate synthase [UDP-forming] (478 aa).

Residues Tyr-89 and Asp-143 each contribute to the D-glucose 6-phosphate site. UDP contacts are provided by Arg-280 and Lys-285. Residues Arg-280 and Lys-285 each coordinate UDP-alpha-D-glucose. Arg-318 is a D-glucose 6-phosphate binding site. UDP is bound by residues Ile-357 and 383 to 387 (LVSYE). UDP-alpha-D-glucose-binding positions include Ile-357 and 379–387 (DGMNLVSYE).

Belongs to the glycosyltransferase 20 family.

It catalyses the reaction D-glucose 6-phosphate + UDP-alpha-D-glucose = alpha,alpha-trehalose 6-phosphate + UDP + H(+). The protein operates within carbohydrate biosynthesis. With respect to regulation, inhibited by validoxylamine A, a non-reactive trehalose analog. In terms of biological role, synthase catalytic subunit of the trehalose synthase complex that catalyzes the production of trehalose from glucose-6-phosphate and UDP-alpha-D-glucose in a two step process. The polypeptide is Alpha,alpha-trehalose-phosphate synthase [UDP-forming] (Candida albicans (strain SC5314 / ATCC MYA-2876) (Yeast)).